Here is a 112-residue protein sequence, read N- to C-terminus: Outer membrane protein assembly factor BamE (112 aa).

Positions 1–19 (MRCKTLTAAAAVLLMLTAG) are cleaved as a signal peptide. C20 carries the N-palmitoyl cysteine lipid modification. C20 carries S-diacylglycerol cysteine lipidation.

It belongs to the BamE family. Part of the Bam complex, which is composed of the outer membrane protein BamA, and four lipoproteins BamB, BamC, BamD and BamE.

It is found in the cell outer membrane. Part of the outer membrane protein assembly complex, which is involved in assembly and insertion of beta-barrel proteins into the outer membrane. The sequence is that of Outer membrane protein assembly factor BamE from Salmonella typhimurium (strain LT2 / SGSC1412 / ATCC 700720).